The sequence spans 431 residues: Polyprenol-phosphate-mannose-dependent alpha-(1-2)-phosphatidylinositol pentamannoside mannosyltransferase (431 aa).

Helical transmembrane passes span 43–63, 108–128, 148–168, 175–195, 202–222, 229–249, 290–310, 332–352, 364–384, and 397–417; these read AAVL…YLAP, FAAV…ALLW, GGTA…AIWI, FDYG…VYTP, LLVG…VYLV, AAAF…LVVG, GFGP…ILAW, LSPI…IWLI, ILGW…LSFA, and LAWA…WIAA.

This sequence belongs to the glycosyltransferase 87 family.

It localises to the cell membrane. It functions in the pathway phospholipid metabolism; phosphatidylinositol metabolism. Catalyzes the alpha-1,2 addition of a mannose residue from polyprenol-phosphate-mannose (PPM) to a monoacyl phosphatidylinositol tetramannoside (AcPIM4) to generate a monoacyl phosphatidylinositol pentamannoside (AcPIM5). The chain is Polyprenol-phosphate-mannose-dependent alpha-(1-2)-phosphatidylinositol pentamannoside mannosyltransferase (pimE) from Mycobacterium tuberculosis (strain CDC 1551 / Oshkosh).